The following is an 83-amino-acid chain: Hainantoxin-III 4 (83 aa).

The N-terminal stretch at 1-21 (MKASMYLALAGLVLLFVVGYA) is a signal peptide. A propeptide spanning residues 22-48 (SESEEKEFPRELLSKIFAVDDFKGKER) is cleaved from the precursor. Disulfide bonds link C50-C65, C57-C70, and C64-C77. The residue at position 81 (L81) is a Leucine amide.

This sequence belongs to the neurotoxin 10 (Hwtx-1) family. 15 (Hntx-3) subfamily. As to quaternary structure, monomer. As to expression, expressed by the venom gland.

The protein localises to the secreted. Its function is as follows. Selective antagonist of neuronal tetrodotoxin (TTX)-sensitive voltage-gated sodium channels (IC(50)=1270 nM on Nav1.1/SCN1A, 270 nM on Nav1.2/SCN2A, 491 nM on Nav1.3/SCN3A and 232 nM on Nav1.7/SCN9A). This toxin suppress Nav1.7 current amplitude without significantly altering the activation, inactivation, and repriming kinetics. Short extreme depolarizations partially activate the toxin-bound channel, indicating voltage-dependent inhibition of this toxin. This toxin increases the deactivation of the Nav1.7 current after extreme depolarizations. The toxin-Nav1.7 complex is gradually dissociated upon prolonged strong depolarizations in a voltage-dependent manner, and the unbound toxin rebinds to Nav1.7 after a long repolarization. Moreover, analysis of chimeric channels showed that the DIIS3-S4 linker is critical for toxin binding to Nav1.7. These data are consistent with this toxin interacting with Nav1.7 site 4 and trapping the domain II voltage sensor in the closed state. In Cyriopagopus hainanus (Chinese bird spider), this protein is Hainantoxin-III 4.